Consider the following 158-residue polypeptide: Crossover junction endodeoxyribonuclease RuvC (158 aa).

Active-site residues include Asp-7, Glu-66, and Asp-139. 3 residues coordinate Mg(2+): Asp-7, Glu-66, and Asp-139.

This sequence belongs to the RuvC family. In terms of assembly, homodimer which binds Holliday junction (HJ) DNA. The HJ becomes 2-fold symmetrical on binding to RuvC with unstacked arms; it has a different conformation from HJ DNA in complex with RuvA. In the full resolvosome a probable DNA-RuvA(4)-RuvB(12)-RuvC(2) complex forms which resolves the HJ. The cofactor is Mg(2+).

It is found in the cytoplasm. The enzyme catalyses Endonucleolytic cleavage at a junction such as a reciprocal single-stranded crossover between two homologous DNA duplexes (Holliday junction).. In terms of biological role, the RuvA-RuvB-RuvC complex processes Holliday junction (HJ) DNA during genetic recombination and DNA repair. Endonuclease that resolves HJ intermediates. Cleaves cruciform DNA by making single-stranded nicks across the HJ at symmetrical positions within the homologous arms, yielding a 5'-phosphate and a 3'-hydroxyl group; requires a central core of homology in the junction. The consensus cleavage sequence is 5'-(A/T)TT(C/G)-3'. Cleavage occurs on the 3'-side of the TT dinucleotide at the point of strand exchange. HJ branch migration catalyzed by RuvA-RuvB allows RuvC to scan DNA until it finds its consensus sequence, where it cleaves and resolves the cruciform DNA. The chain is Crossover junction endodeoxyribonuclease RuvC from Nitratiruptor sp. (strain SB155-2).